A 257-amino-acid chain; its full sequence is uncharacterized protein (257 aa).

This is an uncharacterized protein from Bacillus subtilis (strain 168).